Consider the following 440-residue polypeptide: MAAVRSGLVDIFVQGQWHRVLATLDPTAITLQTMEQNEAEAEKRTVRVVKYDGNGLGISIKGGRDNNMPIVISKIFKGMAADQAGELFLDDVIISVNGENLLDASHEEAVRALKRAGRVVDLQVQYRREDMMHRENIVENVEWDDDIRERVRTIGLKLAYVARAGIDADAEGRILEMRSPSGRYSLAMRCSSSEEADGWFEALHACTTCLLTQALAQVNIMLGNNPQVRHMGWIAEQVSENGISMWKPKFMTLTNSEILFYEAVPQLKAEWAEPRLVRPLVATRVVQTSSRTAPVIKGLTDVISFRMRTGTQQGVRTHTIRVETHAELARWVRAVVIGGYEACLSTSQVSAPCLWRGESCELIVNLDNGISLLSSTGEVLWQHSFETIRATGDDGGRFLWVDFGPPHGEQELDLLNSAKPVVFILHSFLATKVYRLGLYA.

PH domains are found at residues 2–208 and 227–340; these read AAVR…ACTT and QVRH…IGGY. Residues 45-128 enclose the PDZ domain; that stretch reads TVRVVKYDGN…VVDLQVQYRR (84 aa). The 57-residue stretch at 384–440 folds into the SU domain; it reads SFETIRATGDDGGRFLWVDFGPPHGEQELDLLNSAKPVVFILHSFLATKVYRLGLYA.

The protein belongs to the syntrophin family. Component of the dystrophin glycoprotein complex (DGC). Interacts with dyb-1, dys-1 and snf-6 to form the DGC. As to expression, expressed in neurons and muscles; particularly strong expression in the body wall, head and vulval muscles, and in ventral nerve cord (at protein level).

The protein resides in the membrane. Its subcellular location is the cytoplasm. It localises to the cytoskeleton. Adapter protein that binds to and probably organizes the subcellular localization of a variety of membrane proteins. May link various receptors to the actin cytoskeleton and the dystrophin glycoprotein complex (DGC). May also act by slowing calcium channel activity via a direct or indirect mechanism potentially involving other second messengers. Plays an early role in the formation of the neuromuscular junction and is necessary for muscle maintenance. This chain is Syntrophin-1, found in Caenorhabditis elegans.